Consider the following 58-residue polypeptide: Small ribosomal subunit protein bS21 (58 aa).

It belongs to the bacterial ribosomal protein bS21 family.

This Lactobacillus acidophilus (strain ATCC 700396 / NCK56 / N2 / NCFM) protein is Small ribosomal subunit protein bS21.